The sequence spans 53 residues: Temporin-SHd (53 aa).

The first 10 residues, 1-10 (FLGTINLSLC), serve as a signal peptide directing secretion. Positions 11 to 34 (EQERDADEEKRDEPDESDVEVEKR) are excised as a propeptide. At phenylalanine 51 the chain carries Phenylalanine amide.

The protein resides in the secreted. It localises to the target cell membrane. Its function is as follows. Non-amphipathic mildly cationic alpha-helical antimicrobial peptide with potent activity against Gram-positive (including methicillin-resistant Staphylococcus aureus (MRSA)) and Gram-negative bacteria, and some fungi, as well as against Trypanosoma and Leishmania (both promastigote and amastigote forms). Strongly and selectively perturbs anionic bilayer membranes by interacting with the polar head groups and acyl region of the phospholipids, with formation of regions of two coexisting phases, one phase rich in peptide and the other lipid-rich. Shows low hemolytic activity (LC(50)=44 uM) and a low toxicity for human monocytes THP-1 and THP-1-derived macrophages. Is not toxic to human hepatoma-derived cells. The protein is Temporin-SHd of Pelophylax saharicus (Sahara frog).